The primary structure comprises 157 residues: S-ribosylhomocysteine lyase (157 aa).

Fe cation contacts are provided by histidine 54, histidine 58, and cysteine 126.

The protein belongs to the LuxS family. Homodimer. It depends on Fe cation as a cofactor.

The enzyme catalyses S-(5-deoxy-D-ribos-5-yl)-L-homocysteine = (S)-4,5-dihydroxypentane-2,3-dione + L-homocysteine. In terms of biological role, involved in the synthesis of autoinducer 2 (AI-2) which is secreted by bacteria and is used to communicate both the cell density and the metabolic potential of the environment. The regulation of gene expression in response to changes in cell density is called quorum sensing. Catalyzes the transformation of S-ribosylhomocysteine (RHC) to homocysteine (HC) and 4,5-dihydroxy-2,3-pentadione (DPD). The chain is S-ribosylhomocysteine lyase from Bacillus velezensis (strain DSM 23117 / BGSC 10A6 / LMG 26770 / FZB42) (Bacillus amyloliquefaciens subsp. plantarum).